Here is a 331-residue protein sequence, read N- to C-terminus: Cytoskeleton protein RodZ (331 aa).

Topologically, residues 1–111 (MNTEATQDHQ…LGKRRKKRDG (111 aa)) are cytoplasmic. Positions 19-71 (LRHAREQLGLSQQAVAERLCLKVSTVRDIEDDKAPADLASTFLRGYIRSYARL) constitute an HTH cro/C1-type domain. Residues 30-49 (QQAVAERLCLKVSTVRDIED) constitute a DNA-binding region (H-T-H motif). A helical; Signal-anchor for type II membrane protein membrane pass occupies residues 112–132 (WLMSFTWLVLFVVIGLSGAWW). The Periplasmic segment spans residues 133–331 (WQDHKAQQEE…TLNAESSPAQ (199 aa)). A compositionally biased stretch (polar residues) spans 146–166 (MADQSSAELNGGDANSQNVPL). Residues 146 to 238 (MADQSSAELN…ASPLPTDQAN (93 aa)) form a disordered region. Low complexity-rich tracts occupy residues 167 to 202 (DTSAPAAPTADSAANSAPTDTASAPTTSAPAQTPAD) and 216 to 234 (TAGTTPAAPATTPASPLPT).

The protein belongs to the RodZ family.

Its subcellular location is the cell inner membrane. Its function is as follows. Cytoskeletal protein that is involved in cell-shape control through regulation of the length of the long axis. The protein is Cytoskeleton protein RodZ of Klebsiella pneumoniae subsp. pneumoniae (strain ATCC 700721 / MGH 78578).